The following is a 185-amino-acid chain: Protein PBP4 (185 aa).

Low complexity-rich tracts occupy residues 1-24 (MTTTSTTSVDGRTSSTLKATLSAS) and 46-62 (AQAAAKALPRQQQQQQQ). Disordered stretches follow at residues 1-116 (MTTT…YNRE) and 147-168 (ETASGRVSTATDWGTVSSSKNK). Composition is skewed to polar residues over residues 73-83 (PANTKTKTIAS), 91-102 (KGSSTANGSSTN), and 147-166 (ETASGRVSTATDWGTVSSSK).

As to quaternary structure, interacts with IGO1, LSM12 and PBP1.

It localises to the cytoplasm. It is found in the nucleus. This Saccharomyces cerevisiae (strain ATCC 204508 / S288c) (Baker's yeast) protein is Protein PBP4 (PBP4).